A 596-amino-acid polypeptide reads, in one-letter code: Probable ATP-dependent RNA helicase DDX52 (596 aa).

N6-acetyllysine is present on Lys-15. Ser-39 bears the Phosphoserine mark. Residues 68-94 are disordered; sequence LPDEEKTEESQIERKKQNRKKKKITSE. The Q motif motif lies at 163–191; sequence QLDQEYKINSRLLQNILDAGFQTPTPIQM. Positions 194–372 constitute a Helicase ATP-binding domain; the sequence is IPVMLHGREL…RLNLDSVITV (179 aa). Position 207–214 (207–214) interacts with ATP; the sequence is APTGSGKT. The DEAD box motif lies at 316 to 319; sequence DESD. The Helicase C-terminal domain maps to 383–544; sequence TVEQELLFVG…PVPEYIKGFQ (162 aa). The segment at 575–596 is disordered; it reads AKDKRKKVTGQNKKKVAPEDKS. Positions 577–589 are enriched in basic residues; sequence DKRKKVTGQNKKK.

It belongs to the DEAD box helicase family. DDX52/ROK1 subfamily.

The protein resides in the nucleus. Its subcellular location is the nucleolus. It catalyses the reaction ATP + H2O = ADP + phosphate + H(+). The protein is Probable ATP-dependent RNA helicase DDX52 (DDX52) of Bos taurus (Bovine).